A 112-amino-acid chain; its full sequence is MGRDEMLRRSLVALAAAVVVTGVVTASVRKAAATYGFGILAIAGVLLPDWEFFDRDYSQWLTPMPASRRTAAEAAADREHDVWKFKPYPLRMAMLTTIYGFGLYKWWMYVSS.

The signal sequence occupies residues 1 to 25; sequence MGRDEMLRRSLVALAAAVVVTGVVT. The next 2 membrane-spanning stretches (helical) occupy residues 33–53 and 92–112; these read ATYGFGILAIAGVLLPDWEFF and MAMLTTIYGFGLYKWWMYVSS.

This sequence belongs to the SPCS1 family.

The protein resides in the endoplasmic reticulum membrane. Its function is as follows. Functions in tapetum development during early meiosis. May play a role in the endoplasmic reticulum (ER) membrane in the early stages of tapetum development in anthers. Seems to function after MSP1 and before UDT1. The sequence is that of Signal peptidase complex-like protein DTM1 from Oryza sativa subsp. japonica (Rice).